Reading from the N-terminus, the 21-residue chain is KNGTVKWFNAEKGFGFITSED.

Positions 1–21 (KNGTVKWFNAEKGFGFITSED) constitute a CSD domain.

It is found in the cytoplasm. The chain is Cold shock protein CspSt from Streptococcus thermophilus.